The following is a 195-amino-acid chain: Peptidyl-tRNA hydrolase (195 aa).

Tyr17 provides a ligand contact to tRNA. His22 acts as the Proton acceptor in catalysis. Residues Phe68, Asn70, and Asn116 each contribute to the tRNA site.

Belongs to the PTH family. Monomer.

The protein localises to the cytoplasm. The enzyme catalyses an N-acyl-L-alpha-aminoacyl-tRNA + H2O = an N-acyl-L-amino acid + a tRNA + H(+). Functionally, hydrolyzes ribosome-free peptidyl-tRNAs (with 1 or more amino acids incorporated), which drop off the ribosome during protein synthesis, or as a result of ribosome stalling. In terms of biological role, catalyzes the release of premature peptidyl moieties from peptidyl-tRNA molecules trapped in stalled 50S ribosomal subunits, and thus maintains levels of free tRNAs and 50S ribosomes. The polypeptide is Peptidyl-tRNA hydrolase (Erwinia tasmaniensis (strain DSM 17950 / CFBP 7177 / CIP 109463 / NCPPB 4357 / Et1/99)).